The primary structure comprises 107 residues: Class I hydrophobin hgfI (107 aa).

Positions 1–24 (MFSKLAIFATAAFAVLAAATPVRR) are cleaved as a signal peptide. Disulfide bonds link Cys-27-Cys-88, Cys-34-Cys-82, Cys-35-Cys-68, and Cys-89-Cys-102.

This sequence belongs to the fungal hydrophobin family. Self-assembles to form functional amyloid fibrils called rodlets with a length range 100-150 nm. Self-assembly into fibrillar rodlets occurs spontaneously at hydrophobic:hydrophilic interfaces and the rodlets further associate laterally to form amphipathic monolayers. In terms of tissue distribution, only weekly expressed in hyphae cultured in liquid medium.

It is found in the secreted. Its subcellular location is the cell wall. Aerial growth, conidiation, and dispersal of filamentous fungi in the environment rely upon a capability of their secreting small amphipathic proteins called hydrophobins (HPBs) with low sequence identity. Class I can self-assemble into an outermost layer of rodlet bundles on aerial cell surfaces, conferring cellular hydrophobicity that supports fungal growth, development and dispersal; whereas Class II form highly ordered films at water-air interfaces through intermolecular interactions but contribute nothing to the rodlet structure. HgfI is a class I hydrophobin that is involved in cell surface hydrophobicity and lowers the surface tension of water and change the nature of the surfaces to which it adsorbs. This Grifola frondosa (Maitake) protein is Class I hydrophobin hgfI.